Here is a 101-residue protein sequence, read N- to C-terminus: Phosphoribosyl-AMP cyclohydrolase (101 aa).

Asp-71 provides a ligand contact to Mg(2+). Cys-72 is a binding site for Zn(2+). Asp-73 and Asp-75 together coordinate Mg(2+). Residues Cys-88 and Cys-95 each contribute to the Zn(2+) site.

This sequence belongs to the PRA-CH family. In terms of assembly, homodimer. Mg(2+) serves as cofactor. Zn(2+) is required as a cofactor.

The protein resides in the cytoplasm. The enzyme catalyses 1-(5-phospho-beta-D-ribosyl)-5'-AMP + H2O = 1-(5-phospho-beta-D-ribosyl)-5-[(5-phospho-beta-D-ribosylamino)methylideneamino]imidazole-4-carboxamide. It functions in the pathway amino-acid biosynthesis; L-histidine biosynthesis; L-histidine from 5-phospho-alpha-D-ribose 1-diphosphate: step 3/9. Catalyzes the hydrolysis of the adenine ring of phosphoribosyl-AMP. This is Phosphoribosyl-AMP cyclohydrolase from Bacillus cereus (strain B4264).